The sequence spans 389 residues: 8-amino-7-oxononanoate synthase (389 aa).

Arg31 is a binding site for substrate. 109–110 (GY) is a binding site for pyridoxal 5'-phosphate. His134 serves as a coordination point for substrate. Pyridoxal 5'-phosphate contacts are provided by residues Ser180, 205–208 (DEAH), and 236–239 (TLSK). Lys239 carries the post-translational modification N6-(pyridoxal phosphate)lysine. Residue Thr349 participates in substrate binding.

This sequence belongs to the class-II pyridoxal-phosphate-dependent aminotransferase family. BioF subfamily. Homodimer. It depends on pyridoxal 5'-phosphate as a cofactor.

The catalysed reaction is 6-carboxyhexanoyl-[ACP] + L-alanine + H(+) = (8S)-8-amino-7-oxononanoate + holo-[ACP] + CO2. Its pathway is cofactor biosynthesis; biotin biosynthesis. Catalyzes the decarboxylative condensation of pimeloyl-[acyl-carrier protein] and L-alanine to produce 8-amino-7-oxononanoate (AON), [acyl-carrier protein], and carbon dioxide. This Mycobacterium marinum (strain ATCC BAA-535 / M) protein is 8-amino-7-oxononanoate synthase.